We begin with the raw amino-acid sequence, 148 residues long: 3-dehydroquinate dehydratase (148 aa).

Y23 (proton acceptor) is an active-site residue. Residues N74, H80, and D87 each coordinate substrate. H100 functions as the Proton donor in the catalytic mechanism. Substrate-binding positions include 101-102 and R111; that span reads IS.

It belongs to the type-II 3-dehydroquinase family. Homododecamer.

The catalysed reaction is 3-dehydroquinate = 3-dehydroshikimate + H2O. The protein operates within metabolic intermediate biosynthesis; chorismate biosynthesis; chorismate from D-erythrose 4-phosphate and phosphoenolpyruvate: step 3/7. In terms of biological role, catalyzes a trans-dehydration via an enolate intermediate. This is 3-dehydroquinate dehydratase from Caldanaerobacter subterraneus subsp. tengcongensis (strain DSM 15242 / JCM 11007 / NBRC 100824 / MB4) (Thermoanaerobacter tengcongensis).